Here is a 461-residue protein sequence, read N- to C-terminus: Serine/threonine-protein kinase ppk24, mitochondrial (461 aa).

Positions 120 to 416 (FQHLKSIAKG…LDSILGTAWV (297 aa)) constitute a Protein kinase domain. Residues 126–134 (IAKGATSTI) and lysine 153 each bind ATP. Aspartate 256 functions as the Proton acceptor in the catalytic mechanism.

Belongs to the protein kinase superfamily. Ser/Thr protein kinase family.

It is found in the mitochondrion. The catalysed reaction is L-seryl-[protein] + ATP = O-phospho-L-seryl-[protein] + ADP + H(+). It carries out the reaction L-threonyl-[protein] + ATP = O-phospho-L-threonyl-[protein] + ADP + H(+). Functionally, has a role late in meiosis. This is Serine/threonine-protein kinase ppk24, mitochondrial (ppk24) from Schizosaccharomyces pombe (strain 972 / ATCC 24843) (Fission yeast).